The primary structure comprises 458 residues: Adenylosuccinate synthetase (458 aa).

Residues 17–23 (GDEGKGK) and 45–47 (GHT) contribute to the GTP site. Asp-18 (proton acceptor) is an active-site residue. 2 residues coordinate Mg(2+): Asp-18 and Gly-45. IMP contacts are provided by residues 18–21 (DEGK), 43–46 (NAGH), Thr-137, Arg-151, Gln-247, Thr-262, and Arg-330. The active-site Proton donor is His-46. 326-332 (VTTGRSR) contributes to the substrate binding site. Residues Arg-332, 358–360 (KLD), and 440–442 (STS) each bind GTP.

Belongs to the adenylosuccinate synthetase family. Homodimer. It depends on Mg(2+) as a cofactor.

The protein localises to the cytoplasm. It catalyses the reaction IMP + L-aspartate + GTP = N(6)-(1,2-dicarboxyethyl)-AMP + GDP + phosphate + 2 H(+). It functions in the pathway purine metabolism; AMP biosynthesis via de novo pathway; AMP from IMP: step 1/2. Plays an important role in the de novo pathway of purine nucleotide biosynthesis. Catalyzes the first committed step in the biosynthesis of AMP from IMP. The chain is Adenylosuccinate synthetase from Verminephrobacter eiseniae (strain EF01-2).